We begin with the raw amino-acid sequence, 551 residues long: Calnexin homolog (551 aa).

Residues 1-26 (MVDRKEIPLAMGLLAVLLFFVASSSS) form the signal peptide. Residues 27-480 (FHLVRASDEV…EKGEKQPNLT (454 aa)) are Lumenal-facing. Positions 44 and 75 each coordinate Ca(2+). A disulfide bridge links Cys118 with Cys153. 2 residues coordinate an alpha-D-glucoside: Tyr122 and Lys124. N-linked (GlcNAc...) asparagine glycosylation is present at Asn140. Tyr144 and Asp151 together coordinate an alpha-D-glucoside. The interval 226–330 (ALIPSKTIPD…CGEWKRPTKS (105 aa)) is disordered. The tract at residues 233-364 (IPDPDDKKPE…QEIPNPEYFE (132 aa)) is p domain (Extended arm). 2 stretches are compositionally biased toward basic and acidic residues: residues 234 to 269 (PDPDDKKPEDWDERAKIPDPEAVKPEDWDEDAPREI) and 276 to 295 (KPEPWLDHEPEVDDPEAKPE). 5 consecutive repeat copies span residues 235–246 (DPDDKKPEDWDE), 252–263 (DPEAVKPEDWDE), 271–282 (DEEAEKPEPWLD), 289–299 (DPEAKPEDWDD), and 303–313 (GEWEAPKIENP). 4 X approximate repeats stretches follow at residues 235–299 (DPDD…DWDD) and 303–360 (GEWE…IPNP). The segment covering 296 to 305 (DWDDEEDGEW) has biased composition (acidic residues). A disulfide bond links Cys315 and Cys321. 3 repeat units span residues 322–332 (GEWKRPTKSNP), 336–346 (GKWSAPYIDNP), and 350–360 (GIWKPQEIPNP). Glu379 lines the an alpha-D-glucoside pocket. Asp390 provides a ligand contact to Ca(2+). An N-linked (GlcNAc...) asparagine glycan is attached at Asn478. A helical membrane pass occupies residues 481-501 (IGIIVSVVIVFVSIFFRLIFG). Residues 502–551 (GKKPANVEANVEKKKTNTETTSKQDGGEKEDNKEKEETANPPRRRPKRDN) are Cytoplasmic-facing. Residues 510–551 (ANVEKKKTNTETTSKQDGGEKEDNKEKEETANPPRRRPKRDN) form a disordered region. Residues 526–539 (DGGEKEDNKEKEET) show a composition bias toward basic and acidic residues.

This sequence belongs to the calreticulin family. In vegetative and flowering tissues.

Its subcellular location is the endoplasmic reticulum membrane. In terms of biological role, calcium-binding protein that interacts with newly synthesized monoglucosylated glycoproteins in the endoplasmic reticulum. It may act in assisting protein assembly and/or in the retention within the ER of unassembled protein subunits. It seems to play a major role in the quality control apparatus of the ER by the retention of incorrectly folded proteins. The polypeptide is Calnexin homolog (Pisum sativum (Garden pea)).